The chain runs to 72 residues: Translation initiation factor IF-1 (72 aa).

An S1-like domain is found at Met-1–Lys-72.

It belongs to the IF-1 family. In terms of assembly, component of the 30S ribosomal translation pre-initiation complex which assembles on the 30S ribosome in the order IF-2 and IF-3, IF-1 and N-formylmethionyl-tRNA(fMet); mRNA recruitment can occur at any time during PIC assembly.

The protein resides in the cytoplasm. Its function is as follows. One of the essential components for the initiation of protein synthesis. Stabilizes the binding of IF-2 and IF-3 on the 30S subunit to which N-formylmethionyl-tRNA(fMet) subsequently binds. Helps modulate mRNA selection, yielding the 30S pre-initiation complex (PIC). Upon addition of the 50S ribosomal subunit IF-1, IF-2 and IF-3 are released leaving the mature 70S translation initiation complex. The sequence is that of Translation initiation factor IF-1 from Pelotomaculum thermopropionicum (strain DSM 13744 / JCM 10971 / SI).